Here is a 239-residue protein sequence, read N- to C-terminus: Ribosomal RNA small subunit methyltransferase G (239 aa).

Residues G77, F82, 128 to 129, and R146 contribute to the S-adenosyl-L-methionine site; that span reads AE. Residues 214-239 are disordered; it reads IDKKRQTPKKYPRKPGTPNKTPLLEK.

Belongs to the methyltransferase superfamily. RNA methyltransferase RsmG family.

It localises to the cytoplasm. In terms of biological role, specifically methylates the N7 position of guanine in position 535 of 16S rRNA. This is Ribosomal RNA small subunit methyltransferase G from Staphylococcus aureus (strain Mu3 / ATCC 700698).